The chain runs to 276 residues: uncharacterized protein (276 aa).

Residues 1 to 4 (MNRG) constitute a propeptide, leader sequence. Position 5 is an N-methylmethionine (methionine 5). The helical transmembrane segment at 5 to 26 (MTLIELLVALALSIILSLGLYY) threads the bilayer.

It localises to the membrane. This is an uncharacterized protein from Aquifex aeolicus (strain VF5).